A 374-amino-acid chain; its full sequence is Ribosomal RNA large subunit methyltransferase M (374 aa).

S-adenosyl-L-methionine contacts are provided by residues S188, 221–224 (CPGG), D240, D260, and D276. Residue K305 is the Proton acceptor of the active site.

The protein belongs to the class I-like SAM-binding methyltransferase superfamily. RNA methyltransferase RlmE family. RlmM subfamily. As to quaternary structure, monomer.

It is found in the cytoplasm. The catalysed reaction is cytidine(2498) in 23S rRNA + S-adenosyl-L-methionine = 2'-O-methylcytidine(2498) in 23S rRNA + S-adenosyl-L-homocysteine + H(+). Functionally, catalyzes the 2'-O-methylation at nucleotide C2498 in 23S rRNA. This chain is Ribosomal RNA large subunit methyltransferase M, found in Edwardsiella ictaluri (strain 93-146).